A 139-amino-acid polypeptide reads, in one-letter code: Small ribosomal subunit protein uS11 (139 aa).

Low complexity predominate over residues 1 to 13 (MAKQAAKGSAAAT). The segment at 1–30 (MAKQAAKGSAAATKRQRGKRREKKNVPRGQ) is disordered. The span at 14–23 (KRQRGKRREK) shows a compositional bias: basic residues.

This sequence belongs to the universal ribosomal protein uS11 family. Part of the 30S ribosomal subunit. Interacts with proteins S7 and S18. Binds to IF-3.

Functionally, located on the platform of the 30S subunit, it bridges several disparate RNA helices of the 16S rRNA. Forms part of the Shine-Dalgarno cleft in the 70S ribosome. This is Small ribosomal subunit protein uS11 from Roseiflexus sp. (strain RS-1).